A 304-amino-acid chain; its full sequence is Non-structural maintenance of chromosomes element 3 homolog (304 aa).

2 disordered regions span residues 1 to 82 (MLQK…PRSQ) and 285 to 304 (ALAD…APSS). A compositionally biased stretch (basic and acidic residues) spans 32 to 43 (AGEDARVLRDGF). 3 positions are modified to phosphoserine: S57, S60, and S64. Over residues 60 to 80 (SQGPSPQGARRAQAAPAVGPR) the composition is skewed to low complexity. The interval 78–304 (GPRSQKQLEL…PQPSGPAPSS (227 aa)) is interaction with NSMCE1. One can recognise an MAGE domain in the interval 85–285 (LELKVSELVQ…KDWPAQYCEA (201 aa)).

As to quaternary structure, component of the SMC5-SMC6 complex which consists at least of SMC5, SMC6, NSMCE2, NSMCE1, NSMCE4A or EID3 and NSMCE3. NSMCE1, NSMCE4A or EID3 and NSMCE3 probably form a subcomplex that bridges the head domains of the SMC5:SMC6 heterodimer. Interacts with PJA1. Interacts with E2F1 (via C-terminus). Interacts with NGFR (via C-terminus). Interacts with NSMCE1. Interacts with NSMCE4. Interacts with SMC6. Interacts with EID3. Ubiquitous.

The protein localises to the cytoplasm. It localises to the nucleus. Its subcellular location is the chromosome. It is found in the telomere. Component of the SMC5-SMC6 complex, a complex involved in repair of DNA double-strand breaks by homologous recombination. The complex may promote sister chromatid homologous recombination by recruiting the SMC1-SMC3 cohesin complex to double-strand breaks. The complex is required for telomere maintenance via recombination in ALT (alternative lengthening of telomeres) cell lines and mediates sumoylation of shelterin complex (telosome) components which is proposed to lead to shelterin complex disassembly in ALT-associated PML bodies (APBs). In vitro enhances ubiquitin ligase activity of NSMCE1. Proposed to act through recruitment and/or stabilization of the Ubl-conjugating enzyme (E2) at the E3:substrate complex. May be a growth suppressor that facilitates the entry of the cell into cell cycle arrest. In Homo sapiens (Human), this protein is Non-structural maintenance of chromosomes element 3 homolog.